A 120-amino-acid polypeptide reads, in one-letter code: NAD(P)H-quinone oxidoreductase subunit 3 (120 aa).

Transmembrane regions (helical) follow at residues 1–21 (MFVL…SLVP), 64–84 (MFAL…PWAV), and 89–109 (LGLL…VALV).

It belongs to the complex I subunit 3 family. As to quaternary structure, NDH-1 can be composed of about 15 different subunits; different subcomplexes with different compositions have been identified which probably have different functions.

The protein resides in the cellular thylakoid membrane. It carries out the reaction a plastoquinone + NADH + (n+1) H(+)(in) = a plastoquinol + NAD(+) + n H(+)(out). The catalysed reaction is a plastoquinone + NADPH + (n+1) H(+)(in) = a plastoquinol + NADP(+) + n H(+)(out). Its function is as follows. NDH-1 shuttles electrons from an unknown electron donor, via FMN and iron-sulfur (Fe-S) centers, to quinones in the respiratory and/or the photosynthetic chain. The immediate electron acceptor for the enzyme in this species is believed to be plastoquinone. Couples the redox reaction to proton translocation, and thus conserves the redox energy in a proton gradient. Cyanobacterial NDH-1 also plays a role in inorganic carbon-concentration. The polypeptide is NAD(P)H-quinone oxidoreductase subunit 3 (Trichormus variabilis (strain ATCC 29413 / PCC 7937) (Anabaena variabilis)).